The following is a 145-amino-acid chain: 3-hydroxyacyl-[acyl-carrier-protein] dehydratase FabZ (145 aa).

Residue His49 is part of the active site.

It belongs to the thioester dehydratase family. FabZ subfamily.

The protein localises to the cytoplasm. The enzyme catalyses a (3R)-hydroxyacyl-[ACP] = a (2E)-enoyl-[ACP] + H2O. Involved in unsaturated fatty acids biosynthesis. Catalyzes the dehydration of short chain beta-hydroxyacyl-ACPs and long chain saturated and unsaturated beta-hydroxyacyl-ACPs. This is 3-hydroxyacyl-[acyl-carrier-protein] dehydratase FabZ from Rickettsia bellii (strain OSU 85-389).